The primary structure comprises 6306 residues: Adhesion G-protein coupled receptor V1 (6306 aa).

A signal peptide spans 1–29; that stretch reads MSVFLGPGMPSASLLVNLLSALLILFVFG. 22 Calx-beta domains span residues 30–117, 133–237, 262–362, 388–488, 645–745, 763–861, 876–979, 993–1093, 1108–1208, 1444–1544, 1564–1665, 1710–1809, 1850–1952, 1966–2079, 2107–2206, 2222–2324, 2441–2541, 2584–2676, 2689–2789, 2814–2925, 2947–3048, and 3063–3172; these read ETEI…FHLT, VTVT…IQLK, PVRF…HIML, KPYG…LQIL, PAIA…TLSL, DLII…VVLS, VNIT…VILL, ATLR…IILL, TVII…LKLV, AMPR…FILK, TIQK…RVTL, TGLP…VELL, ILVT…VSVL, TLTV…IELL, QLII…VQLM, VIII…VQLT, TLCL…FLIS, NISP…VSLV, DTVR…QVIL, LTVE…VNLT, TAQV…LILT, and LIIV…CTLF. The Extracellular portion of the chain corresponds to 30 to 5908; the sequence is ETEIRFTGQT…TDNLSSYNEA (5879 aa). 6 EAR repeats span residues 3255–3296, 3297–3345, 3348–3393, 3395–3439, 3441–3488, and 3492–3534; these read VFSV…RWQG, IFIP…TFTS, KLFL…RWNG, SFVL…RWSG, GFIN…IWEM, and SFRY…CWNS. 13 consecutive Calx-beta domains span residues 3525–3625, 3639–3739, 3775–3875, 3899–4006, 4020–4123, 4139–4239, 4255–4354, 4387–4489, 4512–4612, 4634–4734, 4992–5095, 5288–5332, and 5368–5468; these read DMSA…KVQL, SVTI…IVTL, GLVG…VTIT, AEIM…ISLI, VTVV…IQLI, IIIR…EFQL, ANIT…LTIT, RIII…ILLT, SPFG…IIKL, EFGD…VIQL, SGFI…INLT, AVEE…YVFL, and IGFS…FVEL. The GAIN-B domain occupies 5747–5903; the sequence is SILALHWYPQ…AVYARTDNLS (157 aa). 2 cysteine pairs are disulfide-bonded: C5856–C5885 and C5873–C5887. Residues 5856–5903 are GPS; that stretch reads CLLWNQAAASWLSDSQFCKVVEETADYVECACSHMSVYAVYARTDNLS. Residues 5909-5929 traverse the membrane as a helical segment; the sequence is FFTSGFICISGLCLAVLSHIF. Over 5930 to 5939 the chain is Cytoplasmic; it reads CARYSMFAAK. A helical transmembrane segment spans residues 5940 to 5960; sequence LLTHMMAASLGTQILFLASAY. The Extracellular portion of the chain corresponds to 5961–5979; that stretch reads ASPQLAEESCSAMAAVTHY. The chain crosses the membrane as a helical span at residues 5980-6000; that stretch reads LYLCQFSWMLIQSVNFWYVLV. The Cytoplasmic portion of the chain corresponds to 6001–6010; it reads MNDEHTERRY. A helical transmembrane segment spans residues 6011 to 6031; that stretch reads LLFFLLSWGLPAFVVILLIVI. The Extracellular segment spans residues 6032–6059; sequence LKGIYHQSMSQIYGLIHGDLCFIPNVYA. The chain crosses the membrane as a helical span at residues 6060 to 6080; it reads ALFTAALVPLTCLVVVFVVFI. The Cytoplasmic segment spans residues 6081–6104; it reads HAYQVKPQWKAYDDVFRGRTNAAE. A helical membrane pass occupies residues 6105–6125; sequence IPLILYLFALISVTWLWGGLH. Over 6126 to 6133 the chain is Extracellular; it reads MAYRHFWM. The chain crosses the membrane as a helical span at residues 6134–6154; it reads LVLFVIFNSLQGLYVFMVYFI. Residues 6155-6306 lie on the Cytoplasmic side of the membrane; sequence LHNQMCCPMK…RRIPIADTHL (152 aa). The segment at 6216 to 6248 is disordered; that stretch reads ASFQQGSQASPDLKPSPQNGATFPSSGGYGQGS. The span at 6217-6240 shows a compositional bias: polar residues; it reads SFQQGSQASPDLKPSPQNGATFPS.

Belongs to the G-protein coupled receptor 2 family. Adhesion G-protein coupled receptor (ADGR) subfamily. In terms of assembly, forms a heterodimer, consisting of a large extracellular region (alpha subunit) non-covalently linked to a seven-transmembrane moiety (beta subunit). Component of USH2 complex, composed of ADGRV1, PDZD7, USH2A and WHRN. Interacts with USH2A and WHRN. Interacts (via the cytoplasmic region) with PDZD7. Interacts (via the cytoplasmic region) with MYO7A (via MyTH4-FERM domains). Autoproteolytically cleaved into 2 subunits, an extracellular alpha subunit and a seven-transmembrane subunit. As to expression, expressed at low levels in adult tissues.

The protein localises to the cell membrane. Its subcellular location is the cell projection. It localises to the stereocilium membrane. The protein resides in the photoreceptor inner segment. G-protein coupled receptor which has an essential role in the development of hearing and vision. Couples to G-alpha(i)-proteins, GNAI1/2/3, G-alpha(q)-proteins, GNAQ, as well as G-alpha(s)-proteins, GNAS, inhibiting adenylate cyclase (AC) activity and cAMP production. Required for the hair bundle ankle formation, which connects growing stereocilia in developing cochlear hair cells of the inner ear. In response to extracellular calcium, activates kinases PKA and PKC to regulate myelination by inhibiting the ubiquitination of MAG, thus enhancing the stability of this protein in myelin-forming cells of the auditory pathway. In retina photoreceptors, the USH2 complex is required for the maintenance of periciliary membrane complex that seems to play a role in regulating intracellular protein transport. Involved in the regulation of bone metabolism. In terms of biological role, cleaved ADGRV1 beta-subunit couples with G-alpha(i)-proteins, GNAI1/2/3, and constitutively inhibits adenylate cyclase (AC) activity with a stronger effect than full ADGRV1. This Homo sapiens (Human) protein is Adhesion G-protein coupled receptor V1.